A 116-amino-acid polypeptide reads, in one-letter code: U16-barytoxin-Tl1b (116 aa).

The signal sequence occupies residues 1-20 (MKTIIVFLSLLVLATKFGDA). The propeptide occupies 21 to 74 (KEGVNQKQKKEVTQNEFREEYLNEMAAMSLVQQLEAIERALFENEAGRNSRQKR). 3 cysteine pairs are disulfide-bonded: Cys75–Cys90, Cys82–Cys95, and Cys89–Cys110.

The protein belongs to the neurotoxin 14 (magi-1) family. 06 (ICK-Trit) subfamily. In terms of tissue distribution, expressed by the venom gland.

The protein resides in the secreted. Functionally, ion channel inhibitor. This chain is U16-barytoxin-Tl1b, found in Trittame loki (Brush-footed trapdoor spider).